The following is a 217-amino-acid chain: 3,4-dihydroxy-2-butanone 4-phosphate synthase (217 aa).

D-ribulose 5-phosphate-binding positions include 37–38, Asp42, 150–154, and Glu174; these read RE and RGGHT. Residue Glu38 participates in Mg(2+) binding. Mg(2+) is bound at residue His153.

It belongs to the DHBP synthase family. In terms of assembly, homodimer. Requires Mg(2+) as cofactor. It depends on Mn(2+) as a cofactor.

It catalyses the reaction D-ribulose 5-phosphate = (2S)-2-hydroxy-3-oxobutyl phosphate + formate + H(+). It participates in cofactor biosynthesis; riboflavin biosynthesis; 2-hydroxy-3-oxobutyl phosphate from D-ribulose 5-phosphate: step 1/1. Functionally, catalyzes the conversion of D-ribulose 5-phosphate to formate and 3,4-dihydroxy-2-butanone 4-phosphate. The polypeptide is 3,4-dihydroxy-2-butanone 4-phosphate synthase (Salmonella arizonae (strain ATCC BAA-731 / CDC346-86 / RSK2980)).